A 240-amino-acid chain; its full sequence is UDP-2,3-diacylglucosamine hydrolase (240 aa).

D8, H10, D41, N78, and H113 together coordinate Mn(2+). 78–79 (NR) contributes to the substrate binding site. 5 residues coordinate substrate: D121, S159, N163, K166, and H194. Mn(2+) is bound by residues H194 and H196.

This sequence belongs to the LpxH family. Requires Mn(2+) as cofactor.

Its subcellular location is the cell inner membrane. The catalysed reaction is UDP-2-N,3-O-bis[(3R)-3-hydroxytetradecanoyl]-alpha-D-glucosamine + H2O = 2-N,3-O-bis[(3R)-3-hydroxytetradecanoyl]-alpha-D-glucosaminyl 1-phosphate + UMP + 2 H(+). Its pathway is glycolipid biosynthesis; lipid IV(A) biosynthesis; lipid IV(A) from (3R)-3-hydroxytetradecanoyl-[acyl-carrier-protein] and UDP-N-acetyl-alpha-D-glucosamine: step 4/6. Its function is as follows. Hydrolyzes the pyrophosphate bond of UDP-2,3-diacylglucosamine to yield 2,3-diacylglucosamine 1-phosphate (lipid X) and UMP by catalyzing the attack of water at the alpha-P atom. Involved in the biosynthesis of lipid A, a phosphorylated glycolipid that anchors the lipopolysaccharide to the outer membrane of the cell. The polypeptide is UDP-2,3-diacylglucosamine hydrolase (Shewanella baltica (strain OS195)).